The following is a 338-amino-acid chain: Glycerol-3-phosphate dehydrogenase [NAD(P)+] (338 aa).

Positions 14, 15, 35, and 109 each coordinate NADPH. Residues Lys109, Gly138, and Thr140 each coordinate sn-glycerol 3-phosphate. Ala142 provides a ligand contact to NADPH. 5 residues coordinate sn-glycerol 3-phosphate: Lys194, Asp247, Ser257, Arg258, and Asn259. Lys194 (proton acceptor) is an active-site residue. Arg258 lines the NADPH pocket. The NADPH site is built by Val282 and Glu284.

Belongs to the NAD-dependent glycerol-3-phosphate dehydrogenase family.

The protein localises to the cytoplasm. It carries out the reaction sn-glycerol 3-phosphate + NAD(+) = dihydroxyacetone phosphate + NADH + H(+). The catalysed reaction is sn-glycerol 3-phosphate + NADP(+) = dihydroxyacetone phosphate + NADPH + H(+). It participates in membrane lipid metabolism; glycerophospholipid metabolism. In terms of biological role, catalyzes the reduction of the glycolytic intermediate dihydroxyacetone phosphate (DHAP) to sn-glycerol 3-phosphate (G3P), the key precursor for phospholipid synthesis. In Shewanella oneidensis (strain ATCC 700550 / JCM 31522 / CIP 106686 / LMG 19005 / NCIMB 14063 / MR-1), this protein is Glycerol-3-phosphate dehydrogenase [NAD(P)+].